A 229-amino-acid chain; its full sequence is Large ribosomal subunit protein bL19cy (229 aa).

A chloroplast-targeting transit peptide spans 1 to 70; sequence MATSSHLLPQ…DSKKRKEFIA (70 aa).

The protein belongs to the bacterial ribosomal protein bL19 family. In terms of assembly, part of the 50S ribosomal subunit.

The protein resides in the plastid. It is found in the chloroplast. In terms of biological role, located at the 30S-50S ribosomal subunit interface and binds directly to 23S ribosomal RNA. The polypeptide is Large ribosomal subunit protein bL19cy (Arabidopsis thaliana (Mouse-ear cress)).